The following is a 299-amino-acid chain: Very long chain fatty acid elongase 5 (299 aa).

M1 is modified (N-acetylmethionine). The next 6 helical transmembrane spans lie at 26-46, 64-84, 112-132, 150-170, 205-225, and 226-246; these read WFLLDNYIPTFICSVIYLLIV, ILVVYNLGLTLLSLYMFCELV, VLRWYYFSKLIEFMDTFFFIL, MLNIWWFVMNWVPCGHSYFGA, GQLLQFVLTIIQTSCGVIWPC, and TFPLGWLYFQIGYMISLIALF. Residues 275-299 form a disordered region; that stretch reads AAVNGHTNSFSPLENNVKPRKLRKD. The segment covering 279 to 288 has biased composition (polar residues); it reads GHTNSFSPLE. The residue at position 285 (S285) is a Phosphoserine.

The protein belongs to the ELO family. ELOVL5 subfamily. Interacts with TECR.

The protein localises to the endoplasmic reticulum membrane. It localises to the cell projection. It is found in the dendrite. It catalyses the reaction a very-long-chain acyl-CoA + malonyl-CoA + H(+) = a very-long-chain 3-oxoacyl-CoA + CO2 + CoA. The catalysed reaction is (6Z,9Z,12Z)-octadecatrienoyl-CoA + malonyl-CoA + H(+) = (8Z,11Z,14Z)-3-oxoeicosatrienoyl-CoA + CO2 + CoA. The enzyme catalyses (9Z,12Z,15Z)-octadecatrienoyl-CoA + malonyl-CoA + H(+) = (11Z,14Z,17Z)-3-oxoeicosatrienoyl-CoA + CO2 + CoA. It carries out the reaction (9Z)-hexadecenoyl-CoA + malonyl-CoA + H(+) = 3-oxo-(11Z)-octadecenoyl-CoA + CO2 + CoA. It catalyses the reaction (9Z)-octadecenoyl-CoA + malonyl-CoA + H(+) = 3-oxo-(11Z)-eicosenoyl-CoA + CO2 + CoA. The catalysed reaction is (11Z)-octadecenoyl-CoA + malonyl-CoA + H(+) = 3-oxo-(13Z)-eicosenoyl-CoA + CO2 + CoA. The enzyme catalyses (9Z,12Z)-octadecadienoyl-CoA + malonyl-CoA + H(+) = (11Z,14Z)-3-oxoicosa-11,14-dienoyl-CoA + CO2 + CoA. It carries out the reaction (6Z,9Z,12Z,15Z)-octadecatetraenoyl-CoA + malonyl-CoA + H(+) = (8Z,11Z,14Z,17Z)-3-oxoicosatetraenoyl-CoA + CO2 + CoA. It catalyses the reaction (5Z,8Z,11Z,14Z)-eicosatetraenoyl-CoA + malonyl-CoA + H(+) = (7Z,10Z,13Z,16Z)-3-oxodocosatetraenoyl-CoA + CO2 + CoA. The catalysed reaction is (5Z,8Z,11Z,14Z,17Z)-eicosapentaenoyl-CoA + malonyl-CoA + H(+) = 3-oxo-(7Z,10Z,13Z,16Z,19Z)-docosapentaenoyl-CoA + CO2 + CoA. The protein operates within lipid metabolism; polyunsaturated fatty acid biosynthesis. In terms of biological role, catalyzes the first and rate-limiting reaction of the four reactions that constitute the long-chain fatty acids elongation cycle. This endoplasmic reticulum-bound enzymatic process allows the addition of 2 carbons to the chain of long- and very long-chain fatty acids (VLCFAs) per cycle. Condensing enzyme that acts specifically toward polyunsaturated acyl-CoA with the higher activity toward C18:3(n-6) acyl-CoA. May participate in the production of monounsaturated and of polyunsaturated VLCFAs of different chain lengths that are involved in multiple biological processes as precursors of membrane lipids and lipid mediators. In conditions where the essential linoleic and alpha linoleic fatty acids are lacking it is also involved in the synthesis of Mead acid from oleic acid. This is Very long chain fatty acid elongase 5 from Macaca fascicularis (Crab-eating macaque).